The primary structure comprises 167 residues: Lipoprotein signal peptidase (167 aa).

3 helical membrane passes run 7-27 (LFLL…KYWV), 61-81 (FSHW…LWLW), and 87-107 (NKFL…GNLI). Residues aspartate 117 and aspartate 136 contribute to the active site. A helical transmembrane segment spans residues 126–146 (IFYFAIFNLADSFITLGVIVI).

Belongs to the peptidase A8 family.

Its subcellular location is the cell inner membrane. It catalyses the reaction Release of signal peptides from bacterial membrane prolipoproteins. Hydrolyzes -Xaa-Yaa-Zaa-|-(S,diacylglyceryl)Cys-, in which Xaa is hydrophobic (preferably Leu), and Yaa (Ala or Ser) and Zaa (Gly or Ala) have small, neutral side chains.. It participates in protein modification; lipoprotein biosynthesis (signal peptide cleavage). Its function is as follows. This protein specifically catalyzes the removal of signal peptides from prolipoproteins. In Bartonella tribocorum (strain CIP 105476 / IBS 506), this protein is Lipoprotein signal peptidase.